A 344-amino-acid polypeptide reads, in one-letter code: uncharacterized protein (344 aa).

Positions 190-232 (SGKRVRSAKKSGADAARASEGATCDRASSESVSPTARPPAQAS) are disordered.

This is an uncharacterized protein from Treponema pallidum (strain Nichols).